Here is a 429-residue protein sequence, read N- to C-terminus: Putative F-box/kelch-repeat protein At2g21680 (429 aa).

The segment at 1 to 32 is disordered; it reads MVLISETSDDGSTGGDHQIKKPKKEEDRNKKL. Residues 17-29 show a composition bias toward basic and acidic residues; the sequence is HQIKKPKKEEDRN. The 48-residue stretch at 37–84 folds into the F-box domain; sequence QVSLPIPEELILRCFLLVRRCHHPSLSLVCRSFHSLMSKLYDDRLRLG. 5 Kelch repeats span residues 144–175, 176–221, 222–267, 269–313, and 315–359; these read DIYV…RRGE, TSIR…VIDG, KIYV…LTYA, MKEK…VVDN, and LFCI…DGYK.

This Arabidopsis thaliana (Mouse-ear cress) protein is Putative F-box/kelch-repeat protein At2g21680.